The primary structure comprises 62 residues: Large ribosomal subunit protein eL37 (62 aa).

4 residues coordinate Zn(2+): Cys-20, Cys-23, Cys-35, and Cys-38. The C4-type zinc-finger motif lies at Cys-20–Cys-38.

The protein belongs to the eukaryotic ribosomal protein eL37 family. It depends on Zn(2+) as a cofactor.

Its function is as follows. Binds to the 23S rRNA. The sequence is that of Large ribosomal subunit protein eL37 (rpl37e) from Aeropyrum pernix (strain ATCC 700893 / DSM 11879 / JCM 9820 / NBRC 100138 / K1).